Reading from the N-terminus, the 741-residue chain is HSP-interacting protein (741 aa).

3 TPR repeats span residues 26 to 59 (SRELKEEGTRLFNRRDFEGAAFKYDKAVQLLPAG), 65 to 100 (AHLRASIAHCYMRMSPAEFHHAIHECNLALEAVPRY), and 102 to 134 (RALLRRAACFEALGRPDLAWGDIRTVLRWEPGN). A disordered region spans residues 168 to 270 (ASAKGEERKK…GESKQQKHSA (103 aa)). A compositionally biased stretch (basic and acidic residues) spans 171-184 (KGEERKKSRNKRFD). Residues 201–218 (SASTEKQAGPRQTNGTGN) show a composition bias toward polar residues. Residues 219–247 (HQDHTEDSESNGLEKLEQSTETGEKDMGK) are compositionally biased toward basic and acidic residues. Residues 248–258 (KRGAHAAGKKP) are compositionally biased toward basic residues. Positions 285–364 (MKDVKLVFGE…VPIRFYVVEV (80 aa)) constitute a PB1 domain. TPR repeat units lie at residues 496–530 (EFILEKVNVSYDWACTEYAKAGAMFEEAVKTKSDF), 532–557 (EGLIALGQQKFEQAKLSWYYALACKI), 558–591 (NMETEVLELFNHAEDNMEKGMDMWERMETLRLKG), and 628–663 (SHINILWGTILYERSVVEFNLGLPSWEESLTVAMEK).

Interacts (via C-terminus) with O1. Interacts (via C-terminus) with OP10 (via N-terminus).

Functionally, acts as a co-chaperone for HSP90 and is required for proper folding of the myosin motor domain. This Zea mays (Maize) protein is HSP-interacting protein.